The chain runs to 472 residues: Divalent metal cation transporter MntH (472 aa).

11 helical membrane passes run 59 to 79, 92 to 112, 136 to 156, 167 to 187, 196 to 216, 233 to 253, 288 to 308, 325 to 345, 377 to 397, 402 to 422, and 439 to 459; these read LLAF…PGNW, MLLS…ALAA, LALW…EVIG, VPII…LLLM, AFVI…IVLA, VVAD…TVMP, LALM…AAVF, LLAP…ALLA, VLTR…YGEQ, LLLL…IPLL, and WLMV…VKLL.

Belongs to the NRAMP family.

Its subcellular location is the cell inner membrane. In terms of biological role, h(+)-stimulated, divalent metal cation uptake system. The chain is Divalent metal cation transporter MntH from Xylella fastidiosa (strain 9a5c).